Reading from the N-terminus, the 430-residue chain is Trigger factor (430 aa).

The PPIase FKBP-type domain maps to 163–248 (GNIAIIDFKG…IKDIKVKELP (86 aa)).

It belongs to the FKBP-type PPIase family. Tig subfamily.

It localises to the cytoplasm. The enzyme catalyses [protein]-peptidylproline (omega=180) = [protein]-peptidylproline (omega=0). Functionally, involved in protein export. Acts as a chaperone by maintaining the newly synthesized protein in an open conformation. Functions as a peptidyl-prolyl cis-trans isomerase. The sequence is that of Trigger factor from Clostridium botulinum (strain Okra / Type B1).